The following is a 227-amino-acid chain: Flagellar L-ring protein 2 (227 aa).

Residues Met1–Ala17 form the signal peptide. Cys18 is lipidated: N-palmitoyl cysteine. The S-diacylglycerol cysteine moiety is linked to residue Cys18.

The protein belongs to the FlgH family. As to quaternary structure, the basal body constitutes a major portion of the flagellar organelle and consists of four rings (L,P,S, and M) mounted on a central rod.

The protein localises to the cell outer membrane. The protein resides in the bacterial flagellum basal body. Assembles around the rod to form the L-ring and probably protects the motor/basal body from shearing forces during rotation. The polypeptide is Flagellar L-ring protein 2 (Chromobacterium violaceum (strain ATCC 12472 / DSM 30191 / JCM 1249 / CCUG 213 / NBRC 12614 / NCIMB 9131 / NCTC 9757 / MK)).